Consider the following 180-residue polypeptide: Beta-lactoglobulin (180 aa).

Positions 1-18 are cleaved as a signal peptide; sequence MKCLLLALGLALACAAQA. Disulfide bonds link cysteine 84–cysteine 178, cysteine 124–cysteine 137, and cysteine 124–cysteine 139.

Belongs to the calycin superfamily. Lipocalin family. Under physiological conditions beta-lactoglobulin exists as an equilibrium mixture of monomeric and dimeric forms. Interaction with LMBR1L is controversial. Alternate disulfide bonds occur in equal amounts. In terms of tissue distribution, synthesized in mammary gland and secreted in milk.

It localises to the secreted. In terms of biological role, primary component of whey, it binds retinol and is probably involved in the transport of that molecule. The chain is Beta-lactoglobulin (LGB) from Bubalus bubalis (Domestic water buffalo).